We begin with the raw amino-acid sequence, 98 residues long: NADH-ubiquinone oxidoreductase chain 4L (98 aa).

Helical transmembrane passes span 1 to 21 (MSLIYMNVMMAFTMSLTGLLM), 29 to 49 (ALLCMEGMMLSLFILAALTIL), and 61 to 81 (IILLVFAACEAAIGLALLVMI).

This sequence belongs to the complex I subunit 4L family. Core subunit of respiratory chain NADH dehydrogenase (Complex I) which is composed of 45 different subunits.

The protein localises to the mitochondrion inner membrane. It catalyses the reaction a ubiquinone + NADH + 5 H(+)(in) = a ubiquinol + NAD(+) + 4 H(+)(out). Core subunit of the mitochondrial membrane respiratory chain NADH dehydrogenase (Complex I) which catalyzes electron transfer from NADH through the respiratory chain, using ubiquinone as an electron acceptor. Part of the enzyme membrane arm which is embedded in the lipid bilayer and involved in proton translocation. In Berardius bairdii (Baird's beaked whale), this protein is NADH-ubiquinone oxidoreductase chain 4L (MT-ND4L).